Reading from the N-terminus, the 390-residue chain is Galactokinase (390 aa).

33–36 (EHTD) is a binding site for substrate. Residues Ser-67 and 124 to 130 (GSGLSSS) each bind ATP. The Mg(2+) site is built by Ser-130 and Glu-162. The active-site Proton acceptor is Asp-174. Tyr-224 contributes to the substrate binding site.

The protein belongs to the GHMP kinase family. GalK subfamily.

Its subcellular location is the cytoplasm. The enzyme catalyses alpha-D-galactose + ATP = alpha-D-galactose 1-phosphate + ADP + H(+). The protein operates within carbohydrate metabolism; galactose metabolism. In terms of biological role, catalyzes the transfer of the gamma-phosphate of ATP to D-galactose to form alpha-D-galactose-1-phosphate (Gal-1-P). The sequence is that of Galactokinase from Streptococcus mutans serotype c (strain ATCC 700610 / UA159).